The primary structure comprises 179 residues: Macro domain-containing protein XAC3343 (179 aa).

One can recognise a Macro domain in the interval 1–175 (MRIEVWQGDI…AYQQALATQE (175 aa)).

The protein belongs to the MacroD-type family.

The polypeptide is Macro domain-containing protein XAC3343 (Xanthomonas axonopodis pv. citri (strain 306)).